A 551-amino-acid chain; its full sequence is HTH-type transcriptional regulator SgrR (551 aa).

Positions methionine 1 to arginine 116 constitute an HTH marR-type domain. A DNA-binding region (H-T-H motif) is located at residues leucine 26 to aspartate 49. A solute-binding region spans residues glutamate 163–tryptophan 492.

Functionally, activates the small RNA gene sgrS under glucose-phosphate stress conditions as well as yfdZ. Represses its own transcription under both stress and non-stress conditions. Might act as a sensor of the intracellular accumulation of phosphoglucose by binding these molecules in its C-terminal solute-binding domain. This Escherichia coli O6:K15:H31 (strain 536 / UPEC) protein is HTH-type transcriptional regulator SgrR.